The following is a 375-amino-acid chain: Glutamate 5-kinase (375 aa).

Residue lysine 17 coordinates ATP. Serine 57, aspartate 144, and asparagine 158 together coordinate substrate. Position 178–179 (178–179 (TD)) interacts with ATP. In terms of domain architecture, PUA spans 284–360 (SGSIVVDTGA…NEIADILGYK (77 aa)).

The protein belongs to the glutamate 5-kinase family.

The protein localises to the cytoplasm. It catalyses the reaction L-glutamate + ATP = L-glutamyl 5-phosphate + ADP. It functions in the pathway amino-acid biosynthesis; L-proline biosynthesis; L-glutamate 5-semialdehyde from L-glutamate: step 1/2. Functionally, catalyzes the transfer of a phosphate group to glutamate to form L-glutamate 5-phosphate. The chain is Glutamate 5-kinase from Methanococcoides burtonii (strain DSM 6242 / NBRC 107633 / OCM 468 / ACE-M).